Here is a 79-residue protein sequence, read N- to C-terminus: Small ribosomal subunit protein bS18 (79 aa).

The protein belongs to the bacterial ribosomal protein bS18 family. Part of the 30S ribosomal subunit. Forms a tight heterodimer with protein bS6.

In terms of biological role, binds as a heterodimer with protein bS6 to the central domain of the 16S rRNA, where it helps stabilize the platform of the 30S subunit. The chain is Small ribosomal subunit protein bS18 from Streptococcus suis (strain 98HAH33).